A 378-amino-acid polypeptide reads, in one-letter code: SWI/SNF-related matrix-associated actin-dependent regulator of chromatin subfamily B member 1 (378 aa).

The interval 1–106 (MIMALSKTFG…DEKYKAVSIS (106 aa)) is DNA-binding.

Belongs to the SNF5 family. Component of the multiprotein chromatin-remodeling complexes SWI/SNF. Component of neural progenitors-specific chromatin remodeling complex (npBAF complex) and the neuron-specific chromatin remodeling complex (nBAF complex). Component of the BAF (SWI/SNF) chromatin remodeling complex. Component of the SWI/SNF-B (PBAF) chromatin remodeling complex. Binds to double-stranded DNA.

Its subcellular location is the nucleus. Its function is as follows. Involved in chromatin-remodeling. Core component of the BAF (SWI/SNF) complex. This ATP-dependent chromatin-remodeling complex plays important roles in cell proliferation and differentiation, in cellular antiviral activities and inhibition of tumor formation. Belongs to the neural progenitors-specific chromatin remodeling complex (npBAF complex) and the neuron-specific chromatin remodeling complex (nBAF complex) and may play a role in neural development. The polypeptide is SWI/SNF-related matrix-associated actin-dependent regulator of chromatin subfamily B member 1 (smarcb1) (Xenopus laevis (African clawed frog)).